An 89-amino-acid chain; its full sequence is Small ribosomal subunit protein uS15 (89 aa).

It belongs to the universal ribosomal protein uS15 family. As to quaternary structure, part of the 30S ribosomal subunit. Forms a bridge to the 50S subunit in the 70S ribosome, contacting the 23S rRNA.

One of the primary rRNA binding proteins, it binds directly to 16S rRNA where it helps nucleate assembly of the platform of the 30S subunit by binding and bridging several RNA helices of the 16S rRNA. Functionally, forms an intersubunit bridge (bridge B4) with the 23S rRNA of the 50S subunit in the ribosome. This chain is Small ribosomal subunit protein uS15, found in Thermus thermophilus (strain ATCC BAA-163 / DSM 7039 / HB27).